The sequence spans 750 residues: Ribosomal RNA large subunit methyltransferase K/L (750 aa).

Residues 46-157 form the THUMP domain; sequence TAYRLCLWSR…RGEAILSLDL (112 aa).

It belongs to the methyltransferase superfamily. RlmKL family.

It is found in the cytoplasm. It catalyses the reaction guanosine(2445) in 23S rRNA + S-adenosyl-L-methionine = N(2)-methylguanosine(2445) in 23S rRNA + S-adenosyl-L-homocysteine + H(+). It carries out the reaction guanosine(2069) in 23S rRNA + S-adenosyl-L-methionine = N(2)-methylguanosine(2069) in 23S rRNA + S-adenosyl-L-homocysteine + H(+). Its function is as follows. Specifically methylates the guanine in position 2445 (m2G2445) and the guanine in position 2069 (m7G2069) of 23S rRNA. This chain is Ribosomal RNA large subunit methyltransferase K/L, found in Pseudomonas syringae pv. syringae (strain B728a).